The primary structure comprises 129 residues: Protein BEX2 (129 aa).

Residues 1-37 (MESKVEQGVKNLNMENDHQEKEEKEEKPQDASKRDPI) are disordered. Basic and acidic residues predominate over residues 15–36 (ENDHQEKEEKEEKPQDASKRDP). At R51 the chain carries Omega-N-methylarginine. The segment at 118–122 (HHDHH) is his cluster. C126 is a Zn(2+) binding site.

Belongs to the BEX family. In terms of assembly, interacts with LMO2, possibly leading to regulate the transcriptional activity of a DNA-binding complex containing LMO2. Interacts with OMP. Primarily localized to neuronal cells within several regions of the brain, including the olfactory epithelium, bulb, peri/paraventricular nuclei, suprachiasmatic nucleus, arcuate nucleus, median eminence, lateral hypothalamic area, thalamus, hippocampus and cerebellum (at protein level).

Its subcellular location is the cytoplasm. It localises to the nucleus. Its function is as follows. Regulator of mitochondrial apoptosis and G1 cell cycle. Regulates the level of PP2A regulatory subunit B and PP2A phosphatase activity. In absence of reductive stress, acts as a pseudosubstrate for the CRL2(FEM1B) complex: associates with FEM1B via zinc, thereby preventing association between FEM1B and its substrates. The polypeptide is Protein BEX2 (Mus musculus (Mouse)).